Reading from the N-terminus, the 179-residue chain is Replication restart protein DnaT (179 aa).

A compositionally biased stretch (polar residues) spans 151–168; sequence SRSSNGGMPQRDINSVSE. The tract at residues 151-179 is disordered; the sequence is SRSSNGGMPQRDINSVSEPDNHIPPGFRG.

This sequence belongs to the DnaT family. As to quaternary structure, homooligomerizes. Interacts with PriB. Component of the replication restart primosome. Primosome assembly occurs via a 'hand-off' mechanism. PriA binds to replication forks, subsequently PriB then DnaT bind; DnaT then displaces ssDNA to generate the helicase loading substrate.

In terms of biological role, involved in the restart of stalled replication forks, which reloads the replicative helicase on sites other than the origin of replication. Can function in multiple replication restart pathways. Displaces ssDNA from a PriB-ssDNA complex. Probably forms a spiral filament on ssDNA. This is Replication restart protein DnaT from Salmonella heidelberg (strain SL476).